Reading from the N-terminus, the 99-residue chain is A-type ATP synthase subunit F (99 aa).

The protein belongs to the V-ATPase F subunit family. In terms of assembly, has multiple subunits with at least A(3), B(3), C, D, E, F, H, I and proteolipid K(x).

It is found in the cell membrane. In terms of biological role, component of the A-type ATP synthase that produces ATP from ADP in the presence of a proton gradient across the membrane. This is A-type ATP synthase subunit F from Methanococcus vannielii (strain ATCC 35089 / DSM 1224 / JCM 13029 / OCM 148 / SB).